Here is a 2452-residue protein sequence, read N- to C-terminus: Lovastatin diketide synthase lovF (2452 aa).

In terms of domain architecture, Ketosynthase family 3 (KS3) spans 10–381; sequence PAPIAVVGMG…GANAHAIVER (372 aa). Catalysis depends on for beta-ketoacyl synthase activity residues cysteine 173, histidine 308, and histidine 343. The tract at residues 496–790 is malonyl-CoA:ACP transacylase (MAT) domain; it reads VFTGQGAQWF…PYLSCLSRGK (295 aa). Catalysis depends on serine 555, which acts as the For malonyltransferase activity. An N-terminal hotdog fold region spans residues 861 to 998; the sequence is HDLIGLQEPL…GLVRVDMDQP (138 aa). The tract at residues 861 to 1166 is dehydratase (DH) domain; it reads HDLIGLQEPL…LEGLVFQSLG (306 aa). In terms of domain architecture, PKS/mFAS DH spans 861 to 1171; the sequence is HDLIGLQEPL…FQSLGASLGT (311 aa). The active-site Proton acceptor; for dehydratase activity is the histidine 893. A disordered region spans residues 997–1017; the sequence is QPASSLSNPQRADPRPWSRKT. Residues 1012–1171 are C-terminal hotdog fold; it reads PWSRKTAPQD…FQSLGASLGT (160 aa). Residue aspartate 1079 is the Proton donor; for dehydratase activity of the active site. Residues 1343–1528 are methyltransferase (CMet) domain; it reads ELVRLCCHKN…RDCDSDEFYM (186 aa). Residues 1745–2064 form an enoylreductase (ER) domain region; the sequence is GLLDSLYFRK…SGQHVGKIVV (320 aa). Residues 2088–2260 form a ketoreductase (KR) domain region; the sequence is SYLVAGGLGG…AVTIDLGMVQ (173 aa). Residues 2373–2450 enclose the Carrier domain; it reads ASIAVIMEAM…KVAEVVLQRY (78 aa). Position 2410 is an O-(pantetheine 4'-phosphoryl)serine (serine 2410).

In terms of assembly, interacts with LovD. Pantetheine 4'-phosphate is required as a cofactor.

The enzyme catalyses holo-[2-methylbutanoate polyketide synthase] + 2 malonyl-CoA + S-adenosyl-L-methionine + 2 NADPH + 3 H(+) = (S)-2-methylbutanoyl-[2-methylbutanoate polyketide synthase] + S-adenosyl-L-homocysteine + 2 CO2 + 2 NADP(+) + 2 CoA + H2O. It participates in polyketide biosynthesis; lovastatin biosynthesis. Its function is as follows. Lovastatin diketide synthase; part of the gene cluster that mediates the biosynthesis of lovastatin (also known as mevinolin, mevacor or monacolin K), a hypolipidemic inhibitor of (3S)-hydroxymethylglutaryl-coenzyme A (HMG-CoA) reductase (HMGR). The first step in the biosynthesis of lovastatin is the production of dihydromonacolin L acid by the lovastatin nonaketide synthase lovB and the trans-acting enoyl reductase lovC via condensation of one acetyl-CoA unit and 8 malonyl-CoA units. Dihydromonacolin L acid is released from lovB by the thioesterase lovG. Next, dihydromonacolin L acid is oxidized by the dihydromonacolin L monooxygenase lovA twice to form monacolin J acid. The 2-methylbutyrate moiety of lovastatin is synthesized by the lovastatin diketide synthase lovF via condensation of one acetyl-CoA unit and one malonyl-CoA unit. Finally, the covalent attachment of this moiety to monacolin J acid is catalyzed by the transesterase lovD to yield lovastatin. LovD has broad substrate specificity and can also convert monacolin J to simvastatin using alpha-dimethylbutanoyl-S-methyl-3-mercaptopropionate (DMB-S-MMP) as the thioester acyl donor, and can also catalyze the reverse reaction and function as hydrolase in vitro. LovD has much higher activity with LovF-bound 2-methylbutanoate than with free diketide substrates. This Aspergillus terreus (strain NIH 2624 / FGSC A1156) protein is Lovastatin diketide synthase lovF.